A 245-amino-acid chain; its full sequence is Probable transcriptional regulatory protein MAG6590 (245 aa).

The protein belongs to the TACO1 family.

Its subcellular location is the cytoplasm. This chain is Probable transcriptional regulatory protein MAG6590, found in Mycoplasmopsis agalactiae (strain NCTC 10123 / CIP 59.7 / PG2) (Mycoplasma agalactiae).